Consider the following 362-residue polypeptide: Putative F-box/kelch-repeat protein At3g20710 (362 aa).

The F-box domain occupies 1–50 (MMMSNLPKDLVEEILSRVPFKYLRAIRSTCKNWYDLSKNRSFANKNIDKA). 2 Kelch repeats span residues 150–201 (YDKS…VSLN) and 293–341 (IYCR…YFKS).

The sequence is that of Putative F-box/kelch-repeat protein At3g20710 from Arabidopsis thaliana (Mouse-ear cress).